The primary structure comprises 85 residues: Putative membrane protein insertion efficiency factor (85 aa).

Belongs to the UPF0161 family.

The protein resides in the cell inner membrane. In terms of biological role, could be involved in insertion of integral membrane proteins into the membrane. This Shewanella sediminis (strain HAW-EB3) protein is Putative membrane protein insertion efficiency factor.